We begin with the raw amino-acid sequence, 338 residues long: Large ribosomal subunit protein uL10 (338 aa).

The tract at residues 297–338 (PSAQQTQTQQSTAEEKKEEKKEEEKKGPSEEEIGSGLASLFG) is disordered. Residues 298 to 308 (SAQQTQTQQST) show a composition bias toward low complexity. The segment covering 309–325 (AEEKKEEKKEEEKKGPS) has biased composition (basic and acidic residues).

It belongs to the universal ribosomal protein uL10 family. In terms of assembly, part of the 50S ribosomal subunit. Forms part of the ribosomal stalk which helps the ribosome interact with GTP-bound translation factors. Forms a heptameric L10(L12)2(L12)2(L12)2 complex, where L10 forms an elongated spine to which the L12 dimers bind in a sequential fashion.

Functionally, forms part of the ribosomal stalk, playing a central role in the interaction of the ribosome with GTP-bound translation factors. This Saccharolobus islandicus (strain Y.N.15.51 / Yellowstone #2) (Sulfolobus islandicus) protein is Large ribosomal subunit protein uL10.